A 171-amino-acid polypeptide reads, in one-letter code: 16S rRNA aminocarboxypropyltransferase (171 aa).

S-adenosyl-L-methionine contacts are provided by Thr-17, Leu-67, Leu-90, and Thr-109.

It belongs to the TDD superfamily. TSR3 family.

It localises to the cytoplasm. The catalysed reaction is an N(1)-methylpseudouridine in rRNA + S-adenosyl-L-methionine = N(1)-methyl-N(3)-[(3S)-3-amino-3-carboxypropyl]pseudouridine in rRNA + S-methyl-5'-thioadenosine + H(+). Functionally, aminocarboxypropyltransferase that catalyzes the aminocarboxypropyl transfer on pseudouridine corresponding to position 914 in M.jannaschii 16S rRNA. It constitutes the last step in biosynthesis of the hypermodified N1-methyl-N3-(3-amino-3-carboxypropyl) pseudouridine (m1acp3-Psi). The chain is 16S rRNA aminocarboxypropyltransferase from Methanobrevibacter smithii (strain ATCC 35061 / DSM 861 / OCM 144 / PS).